A 131-amino-acid polypeptide reads, in one-letter code: Putative pre-16S rRNA nuclease (131 aa).

This sequence belongs to the YqgF nuclease family.

It localises to the cytoplasm. In terms of biological role, could be a nuclease involved in processing of the 5'-end of pre-16S rRNA. This is Putative pre-16S rRNA nuclease from Bordetella avium (strain 197N).